The primary structure comprises 815 residues: BTB/POZ domain-containing protein KCTD3 (815 aa).

The BTB domain occupies 18-87 (EIVQLNVGGT…LRTKELDLRG (70 aa)). Over residues 139–168 (INNTVRSADSRNGLNSTEGEARGNGTQPVL) the composition is skewed to polar residues. Residues 139 to 170 (INNTVRSADSRNGLNSTEGEARGNGTQPVLSG) are disordered. 8 WD repeats span residues 174-218 (ETVR…GWQQ), 224-263 (YLDW…LWSV), 270-305 (SEIG…VWNA), 310-342 (WQVQ…YIDM), 354-404 (LLVT…VQHP), 412-449 (QLFQ…TWTV), 457-504 (STQP…IQKV), and 510-569 (KLFV…MWDL). The tract at residues 512–815 (FVRLSSTGKR…SDSSGQEYSL (304 aa)) is interaction with HCN3. Residues Ser-604, Ser-664, and Ser-711 each carry the phosphoserine modification. A compositionally biased stretch (basic and acidic residues) spans 736–758 (SESKKRSSEDENENKIEFRKKGG). The segment at 736–815 (SESKKRSSED…SDSSGQEYSL (80 aa)) is disordered. Low complexity predominate over residues 774–800 (ASSPSTSDGGTDSPGTASPSPTKTTPS). Ser-793 is modified (phosphoserine).

This sequence belongs to the KCTD3 family. As to quaternary structure, interacts with HCN3. As to expression, broadly expressed in normal tissues.

It is found in the cell membrane. Functionally, accessory subunit of potassium/sodium hyperpolarization-activated cyclic nucleotide-gated channel 3 (HCN3) up-regulating its cell-surface expression and current density without affecting its voltage dependence and kinetics. The sequence is that of BTB/POZ domain-containing protein KCTD3 (KCTD3) from Homo sapiens (Human).